The sequence spans 112 residues: Photosystem II reaction center Psb28 protein (112 aa).

This sequence belongs to the Psb28 family. Part of the photosystem II complex.

Its subcellular location is the plastid. It localises to the cyanelle thylakoid membrane. This Cyanophora paradoxa protein is Photosystem II reaction center Psb28 protein.